The primary structure comprises 641 residues: MTTFSKTPLLDTIKTPEDLRRLKVEQVRQVADELRQETIDAVSVTGGHFGAGLGVVELTTAIHYVFDTPRDRLIWDVGHQAYPHKILTGRRDRIRTLRTGGGLSGFTKRTESDYDPFGAAHSSTSISAGLGMAVARDLSGGKNNVIAVIGDGAMSAGMAYEAMNNAGAMNSRLIVILNDNDMSIAPPVGAMSAYLSRLYSGKTYRTLRDAAKQLGQHLPKVIANRASRVEEYSRGFMMDGGTLFEELGFYYVGPIDGHNLDHLLPVLKNVRDMETGPILVHVVTQKGKGYPPAEASADKYHAVVKFDVATGTQAKAKPNAPAYQNVFGQSLVKEAEKDDKVVGITAAMPSGTGIDIFAKAFPKRTFDVGIAEQHAVTFAAGLAAEGFKPFCAIYSTFLQRGYDQIVHDVCIQSLPVRFAIDRAGLVGADGATHAGSFDNAYLGCLPNMVIMAASDEAELVHMVATQVAINDRPSSVRYPRGEGRGVEMPEVGVPLPIGKGRMIRQGKQVALLSFGTRLAECEKAADELAAHGLSASIADARFMKPLDEELVLKLAREHEILITIEEGSIGGFGSHVMQYLADQGMLDGGLKMRSMVLPDEFQDHDTPAAMYARAGLDAKGIVRKVFEALGKDYTAEVVKLA.

Residues histidine 79 and 120–122 each bind thiamine diphosphate; that span reads AHS. Aspartate 151 is a binding site for Mg(2+). Residues 152–153, asparagine 180, tyrosine 290, and glutamate 372 each bind thiamine diphosphate; that span reads GA. Asparagine 180 is a Mg(2+) binding site.

Belongs to the transketolase family. DXPS subfamily. In terms of assembly, homodimer. Mg(2+) serves as cofactor. It depends on thiamine diphosphate as a cofactor.

It catalyses the reaction D-glyceraldehyde 3-phosphate + pyruvate + H(+) = 1-deoxy-D-xylulose 5-phosphate + CO2. It participates in metabolic intermediate biosynthesis; 1-deoxy-D-xylulose 5-phosphate biosynthesis; 1-deoxy-D-xylulose 5-phosphate from D-glyceraldehyde 3-phosphate and pyruvate: step 1/1. In terms of biological role, catalyzes the acyloin condensation reaction between C atoms 2 and 3 of pyruvate and glyceraldehyde 3-phosphate to yield 1-deoxy-D-xylulose-5-phosphate (DXP). The chain is 1-deoxy-D-xylulose-5-phosphate synthase from Bradyrhizobium sp. (strain BTAi1 / ATCC BAA-1182).